Consider the following 232-residue polypeptide: Large ribosomal subunit protein uL1 (232 aa).

This sequence belongs to the universal ribosomal protein uL1 family. As to quaternary structure, part of the 50S ribosomal subunit.

Its function is as follows. Binds directly to 23S rRNA. The L1 stalk is quite mobile in the ribosome, and is involved in E site tRNA release. Protein L1 is also a translational repressor protein, it controls the translation of the L11 operon by binding to its mRNA. In Jannaschia sp. (strain CCS1), this protein is Large ribosomal subunit protein uL1.